A 68-amino-acid polypeptide reads, in one-letter code: uncharacterized protein (68 aa).

Positions 1 to 27 are cleaved as a signal peptide; that stretch reads MKGLLCFIYILSAILIGCVFLNKDVEA.

This is an uncharacterized protein from Invertebrate iridescent virus 6 (IIV-6).